The sequence spans 107 residues: Nucleoid-associated protein Pnec_0645 (107 aa).

The protein belongs to the YbaB/EbfC family. In terms of assembly, homodimer.

The protein resides in the cytoplasm. Its subcellular location is the nucleoid. Functionally, binds to DNA and alters its conformation. May be involved in regulation of gene expression, nucleoid organization and DNA protection. The chain is Nucleoid-associated protein Pnec_0645 from Polynucleobacter necessarius subsp. necessarius (strain STIR1).